We begin with the raw amino-acid sequence, 256 residues long: Membrane-anchored junction protein (256 aa).

The Nuclear segment spans residues 1–232 (MSLKPFTYPF…HSSPPPPKEP (232 aa)). Disordered stretches follow at residues 143–197 (KRKL…TPAS) and 211–235 (HGLQ…PGAR). Over residues 164–173 (ETSSEASSNK) the composition is skewed to polar residues. Basic and acidic residues predominate over residues 175–184 (PLKESKRSTD). The chain crosses the membrane as a helical span at residues 233–251 (GARGFLGFLSALFPFRYFF). At 252–256 (KKSGQ) the chain is on the perinuclear space side.

This sequence belongs to the MAJIN family. In terms of assembly, component of the MAJIN-TERB1-TERB2 complex, composed of MAJIN, TERB1 and TERB2. In terms of tissue distribution, specifically expressed in germline tissues.

Its subcellular location is the nucleus inner membrane. It localises to the chromosome. The protein resides in the telomere. Functionally, meiosis-specific telomere-associated protein involved in meiotic telomere attachment to the nucleus inner membrane, a crucial step for homologous pairing and synapsis. Component of the MAJIN-TERB1-TERB2 complex, which promotes telomere cap exchange by mediating attachment of telomeric DNA to the inner nuclear membrane and replacement of the protective cap of telomeric chromosomes: in early meiosis, the MAJIN-TERB1-TERB2 complex associates with telomeric DNA and the shelterin/telosome complex. During prophase, the complex matures and promotes release of the shelterin/telosome complex from telomeric DNA. In the complex, MAJIN acts as the anchoring subunit to the nucleus inner membrane. MAJIN shows DNA-binding activity, possibly for the stabilization of telomere attachment on the nucleus inner membrane. In Mus musculus (Mouse), this protein is Membrane-anchored junction protein.